We begin with the raw amino-acid sequence, 1263 residues long: MAEPESEKPSSAQGGGLPSSDHPLNPILQRQIELPEIKINYFSLFRYATVKEYALLLISAFFAAVSGAMFPLLILFIGNLVQVLKDFNLGTIPQEQLSEQIRDIALYIVYLFLGQLVSVFIFTNGCLLVGEAITNAIREKYVRSLFRQNIAFFDTYGSGKITSQLTSSTATIQDAISHKIGLFVSACSCFVASYAIGFVKHWKLTFILTSTVVAITGVMIIMSGFMAKFGANSSGALAEASAKLEETFSGIRVVKALGLEKRLSDELDPQLLNIEFWGKRVRHVMGWMLAIMYGLIFLNYGLAIWQGYRFMQGGTEDVGAIITVLMCLNIGAFLFGNVGPHLQAMSLGAAAAQDIFAVIERESVTDGGAPPGSFEVEGNIEFRNVSHVYPSRPDTHVLQDFSMIFPAGKVTAIVGASGSGKSTIVSILERFYEPVSGQVFLDGHDITHLNVQWLRQQFGLVGQEPVLFNGSIFKNVAYGLKGTQYGQESREVTMKLVTEACRIANAHDFITALPHGYDQEVGIRGASLSGGQRQRIAIARAIVSGPKILLLDEATSALDVQSEEAVQLGLNMASSGRTTIVVAHSLSTIKLADNIIVMEKGRVAQQGTHAELEAQEGLYQTFVRRQQLKQATLEPPHARITPAVDTPASPQHRLSEKTGSIYGQGESEAADKSPSTKYSFVQLVKFVARFNKEDWRLMVTGIASAVISGAVWPAHSVFFAKAIVALSSPSPASLARGPNFWAAMYVMLAFVQIASQGVQGSAFAICAERLILRARRVAFKYLLRQDVEFFDDPLHSSGIMTSFVSSDVNALAGLSGVFLGTLFSATATVLGGLILSLAVGWKLTLVTMGTIPIIIVAGYVRLKLVGTLEKISRKVHEESAGRVCEEINAVRTVAASCLEDEMCEDYVRSLKSKEKTYLRATLWSSGWYALSEAVPLGCMSLGFWYGATLVMRTEYTTEQFFIVVTAVIFGASSAGLVFAFAPDFGKAGVSAERLQELVDRQPEVDTWSEEGDHIETTNGKVDVSNVVFYYNQRSKTPVLNSISLGAAPGQSIGLCGGSGSGKSTVASLLERFYNPSSGTVSLDEKDVRTININSYRAQFALVNQEPLLFSCSIRENLLYGSLGKDLTDSEIEEACKMAQVYDFVCSLPEGLDTSFGSNAVMLSGGQRQRLSIARAILRKPRVLILDEATSALDSTSERAVIEALTKTAEGRTTIMVAHRLSTIQGCDKIFYLRAGAVAEEGTHEELMAKRGSYYDSVNLQSLG.

The segment at methionine 1–aspartate 21 is disordered. A run of 4 helical transmembrane segments spans residues leucine 57 to isoleucine 77, isoleucine 104 to asparagine 124, lysine 179 to valine 199, and phenylalanine 206 to methionine 226. Residues leucine 57 to leucine 347 form the ABC transmembrane type-1 1 domain. Asparagine 232 is a glycosylation site (N-linked (GlcNAc...) asparagine). 2 helical membrane passes run valine 284–isoleucine 304 and valine 318–valine 338. The ABC transporter 1 domain occupies isoleucine 380–arginine 625. Asparagine 384 is a glycosylation site (N-linked (GlcNAc...) asparagine). Glycine 415–serine 422 is a binding site for ATP. An N-linked (GlcNAc...) asparagine glycan is attached at asparagine 469. The tract at residues proline 635–lysine 672 is disordered. 6 helical membrane passes run valine 699–phenylalanine 719, phenylalanine 740–glycine 760, valine 817–valine 839, leucine 843–valine 865, leucine 930–valine 950, and phenylalanine 960–phenylalanine 980. An ABC transmembrane type-1 2 domain is found at valine 699 to lysine 986. In terms of domain architecture, ABC transporter 2 spans valine 1021–leucine 1259. Glycine 1056–serine 1063 contacts ATP.

Belongs to the ABC transporter superfamily. ABCB family. Multidrug resistance exporter (TC 3.A.1.201) subfamily.

The protein localises to the cell membrane. It carries out the reaction ATP + H2O + xenobioticSide 1 = ADP + phosphate + xenobioticSide 2.. In terms of biological role, sirodesmin transporter that provides the dual role of sirodesmin export and self-protection. Also provides tolerance to gliotoxin. The polypeptide is Multidrug resistance protein sirA (Leptosphaeria maculans (Blackleg fungus)).